Consider the following 476-residue polypeptide: GTPase Der (476 aa).

2 consecutive EngA-type G domains span residues 3 to 167 and 205 to 380; these read FTVA…GEDM and LRVA…KTWN. Residues 9–16, 56–60, 119–122, 211–218, 258–262, and 323–326 each bind GTP; these read GRPNVGKS, DTAGL, NKSE, GRPNAGKS, DTAGM, and NKWD. The region spanning 381 to 465 is the KH-like domain; that stretch reads RRISTAKLNR…PIRVHYRGSD (85 aa).

The protein belongs to the TRAFAC class TrmE-Era-EngA-EngB-Septin-like GTPase superfamily. EngA (Der) GTPase family. Associates with the 50S ribosomal subunit.

Functionally, GTPase that plays an essential role in the late steps of ribosome biogenesis. This Agrobacterium fabrum (strain C58 / ATCC 33970) (Agrobacterium tumefaciens (strain C58)) protein is GTPase Der.